The sequence spans 250 residues: DNA polymerase sliding clamp (250 aa).

Belongs to the PCNA family. In terms of assembly, homotrimer. The subunits circularize to form a toroid; DNA passes through its center. Replication factor C (RFC) is required to load the toroid on the DNA.

In terms of biological role, sliding clamp subunit that acts as a moving platform for DNA processing. Responsible for tethering the catalytic subunit of DNA polymerase and other proteins to DNA during high-speed replication. The protein is DNA polymerase sliding clamp of Methanococcus maripaludis (strain C6 / ATCC BAA-1332).